A 139-amino-acid chain; its full sequence is Ribonuclease P protein component (139 aa).

Residues 120–139 (KATTGGECTPKSEKCVTAPR) are disordered.

Belongs to the RnpA family. Consists of a catalytic RNA component (M1 or rnpB) and a protein subunit.

It carries out the reaction Endonucleolytic cleavage of RNA, removing 5'-extranucleotides from tRNA precursor.. In terms of biological role, RNaseP catalyzes the removal of the 5'-leader sequence from pre-tRNA to produce the mature 5'-terminus. It can also cleave other RNA substrates such as 4.5S RNA. The protein component plays an auxiliary but essential role in vivo by binding to the 5'-leader sequence and broadening the substrate specificity of the ribozyme. The sequence is that of Ribonuclease P protein component from Chlamydia pneumoniae (Chlamydophila pneumoniae).